Reading from the N-terminus, the 172-residue chain is Small ribosomal subunit protein uS5 (172 aa).

One can recognise an S5 DRBM domain in the interval 13-76 (LIEKMVAVNR…DQARRSMIKV (64 aa)).

It belongs to the universal ribosomal protein uS5 family. As to quaternary structure, part of the 30S ribosomal subunit. Contacts proteins S4 and S8.

Its function is as follows. With S4 and S12 plays an important role in translational accuracy. Functionally, located at the back of the 30S subunit body where it stabilizes the conformation of the head with respect to the body. This chain is Small ribosomal subunit protein uS5, found in Neisseria gonorrhoeae (strain ATCC 700825 / FA 1090).